Reading from the N-terminus, the 33-residue chain is MSDINATRLPIWGIGCNPCVGDEVTALITRGEA.

The propeptide occupies methionine 1 to proline 10. Isoleucine 11 carries the (3R,4R)-4,5-dihydroxyisoleucine; in form alpha-amanitin modification. Isoleucine 11 bears the (3R,4S)-4-hydroxyisoleucine; in form gamma-amanitin mark. The cyclopeptide (Ile-Pro) cross-link spans isoleucine 11–proline 18. Positions tryptophan 12–cysteine 16 form a cross-link, 2'-cysteinyl-6'-hydroxytryptophan sulfoxide (Trp-Cys). Position 18 is a 4-hydroxyproline (proline 18). Positions cysteine 19–alanine 33 are excised as a propeptide.

This sequence belongs to the MSDIN fungal toxin family. Processed by the macrocyclase-peptidase enzyme POPB to yield a toxic cyclic decapeptide. POPB first removes 10 residues from the N-terminus. Conformational trapping of the remaining peptide forces the enzyme to release this intermediate rather than proceed to macrocyclization. The enzyme rebinds the remaining peptide in a different conformation and catalyzes macrocyclization of the N-terminal 8 residues.

In terms of biological role, major toxin belonging to the bicyclic octapeptides amatoxins that acts by binding non-competitively to RNA polymerase II and greatly slowing the elongation of transcripts from target promoters. In Amanita pallidorosea, this protein is Alpha-amanitin proprotein.